The following is a 172-amino-acid chain: Ribosome maturation factor RimM (172 aa).

Residues 95–168 form the PRC barrel domain; it reads QEGEFYYHQI…CVDVELMEGL (74 aa).

It belongs to the RimM family. In terms of assembly, binds ribosomal protein uS19.

The protein resides in the cytoplasm. An accessory protein needed during the final step in the assembly of 30S ribosomal subunit, possibly for assembly of the head region. Essential for efficient processing of 16S rRNA. May be needed both before and after RbfA during the maturation of 16S rRNA. It has affinity for free ribosomal 30S subunits but not for 70S ribosomes. This Streptococcus pyogenes serotype M49 (strain NZ131) protein is Ribosome maturation factor RimM.